The sequence spans 369 residues: Putative F-box protein At1g70960 (369 aa).

Residues 3–54 form the F-box domain; that stretch reads NTSFETLPRHMQMEILSRVPLKFLMKFMCVSKKWASIIRGEEFREDYLFQSM.

The chain is Putative F-box protein At1g70960 from Arabidopsis thaliana (Mouse-ear cress).